The primary structure comprises 379 residues: Homoserine O-succinyltransferase (379 aa).

The AB hydrolase-1 domain occupies Asn48 to Met357. Residue Ser154 is the Nucleophile of the active site. Arg224 serves as a coordination point for substrate. Residues Asp319 and His352 contribute to the active site. Asp353 serves as a coordination point for substrate.

This sequence belongs to the AB hydrolase superfamily. MetX family. In terms of assembly, homodimer.

The protein resides in the cytoplasm. It catalyses the reaction L-homoserine + succinyl-CoA = O-succinyl-L-homoserine + CoA. The protein operates within amino-acid biosynthesis; L-methionine biosynthesis via de novo pathway; O-succinyl-L-homoserine from L-homoserine: step 1/1. In terms of biological role, transfers a succinyl group from succinyl-CoA to L-homoserine, forming succinyl-L-homoserine. The sequence is that of Homoserine O-succinyltransferase from Neisseria gonorrhoeae (strain ATCC 700825 / FA 1090).